A 313-amino-acid polypeptide reads, in one-letter code: 4-diphosphocytidyl-2-C-methyl-D-erythritol kinase (313 aa).

K29 is an active-site residue. An ATP-binding site is contributed by 113–123 (PMGGGVGGGSS). D155 is a catalytic residue.

It belongs to the GHMP kinase family. IspE subfamily.

The catalysed reaction is 4-CDP-2-C-methyl-D-erythritol + ATP = 4-CDP-2-C-methyl-D-erythritol 2-phosphate + ADP + H(+). It functions in the pathway isoprenoid biosynthesis; isopentenyl diphosphate biosynthesis via DXP pathway; isopentenyl diphosphate from 1-deoxy-D-xylulose 5-phosphate: step 3/6. In terms of biological role, catalyzes the phosphorylation of the position 2 hydroxy group of 4-diphosphocytidyl-2C-methyl-D-erythritol. The chain is 4-diphosphocytidyl-2-C-methyl-D-erythritol kinase from Haemophilus influenzae (strain ATCC 51907 / DSM 11121 / KW20 / Rd).